The chain runs to 330 residues: Induced myeloid leukemia cell differentiation protein Mcl-1 homolog (330 aa).

Residues 85-155 are PEST-like; the sequence is LAVPPEEMAA…PPEEEDDELY (71 aa). Ser-101 bears the Phosphoserine mark. Lys-116 participates in a covalent cross-link: Glycyl lysine isopeptide (Lys-Gly) (interchain with G-Cter in ubiquitin). Residues 129 to 153 form a disordered region; sequence EAAKSSGADGSLPSTPPPPEEEDDE. Ser-139 carries the post-translational modification Phosphoserine; by GSK3-alpha and GSK3-beta. Ser-142 bears the Phosphoserine mark. Residue Thr-143 is modified to Phosphothreonine; by MAPK. Glycyl lysine isopeptide (Lys-Gly) (interchain with G-Cter in ubiquitin) cross-links involve residues Lys-174 and Lys-177. Residues 189–203 carry the BH3 motif; sequence ALETLRRVGDGVQRN. Residues 232–252 carry the BH1 motif; it reads HVFKDGVTNWGRIVTLISFGA. A BH2 motif is present at residues 284 to 299; it reads DWLVKQRGWDGFVEFF. A helical membrane pass occupies residues 307–329; the sequence is GIRNVLLAFAGVAGVGAGLAYLI.

Belongs to the Bcl-2 family. As to quaternary structure, interacts with HIF3A (via C-terminus domain). Interacts with BOK, BIK, BAX, BAK1, and TPT1. Interacts with unphosphorylated BAD. Interacts with BMF, BBC3 and PMAIP1. Interacts with BOP. Interacts with BCL2L11; may sequester BCL2L11 to prevent its pro-apoptotic activity. Interacts with GIMAP5 and HSPA8/HSC70; the interaction between HSPA8 and MCL1 is impaired in the absence of GIMAP5. Cleaved by CASP3 during apoptosis, yielding a pro-apoptotic C-terminal fragment. In terms of processing, rapidly degraded in the absence of phosphorylation in the PEST region. Post-translationally, phosphorylated on Ser-139, by GSK3, in response to IL3/interleukin-3 withdrawal. Phosphorylation at Ser-139 induces ubiquitination and proteasomal degradation, abrogating the anti-apoptotic activity. Treatment with taxol or okadaic acid induces phosphorylation on additional sites. Ubiquitinated. Ubiquitination is induced by phosphorylation at Ser-139. Deubiquitinated by USP20; leading to increased stability. In terms of tissue distribution, ubiquitous. Highly expressed in heart, spleen, lung, liver, skeletal muscle and kidney. Detected at lower levels in brain, ovary, oviduct and testis.

It localises to the membrane. The protein resides in the cytoplasm. Its subcellular location is the mitochondrion. The protein localises to the nucleus. It is found in the nucleoplasm. In terms of biological role, involved in the regulation of apoptosis versus cell survival, and in the maintenance of viability but not of proliferation. Mediates its effects by interactions with a number of other regulators of apoptosis. The chain is Induced myeloid leukemia cell differentiation protein Mcl-1 homolog (Mcl1) from Rattus norvegicus (Rat).